We begin with the raw amino-acid sequence, 891 residues long: Echinoderm microtubule-associated protein-like elp-1 (891 aa).

Positions 77 to 88 (DQSRSPTCSGYS) are enriched in polar residues. The segment at 77-167 (DQSRSPTCSG…ARGSPMRKWV (91 aa)) is disordered. Over residues 104–117 (SPSHAPPRSSHANS) the composition is skewed to low complexity. Residues 118–131 (KSLYINGMNNNSEE) are compositionally biased toward polar residues. WD repeat units follow at residues 330-401 (GHTC…TLMV), 404-447 (GFEK…REGE), 499-537 (DKPK…TTKQ), 541-579 (VHPG…RTRR), 626-664 (GDPG…VEFS), 708-747 (EGTA…NLLV), 753-792 (HIPA…CDGT), 816-853 (SSNG…VTAG), and 859-890 (GHGR…EWCL).

Belongs to the WD repeat EMAP family.

The protein resides in the cytoplasm. The protein localises to the cytoskeleton. In terms of biological role, may modify the assembly dynamics of microtubules, such that microtubules are slightly longer, but more dynamic. The polypeptide is Echinoderm microtubule-associated protein-like elp-1 (elp-1) (Caenorhabditis elegans).